The following is a 322-amino-acid chain: Probable ethanolamine-phosphate cytidylyltransferase (322 aa).

This sequence belongs to the cytidylyltransferase family.

It catalyses the reaction phosphoethanolamine + CTP + H(+) = CDP-ethanolamine + diphosphate. Its pathway is phospholipid metabolism; phosphatidylethanolamine biosynthesis; phosphatidylethanolamine from ethanolamine: step 2/3. In Encephalitozoon cuniculi (strain GB-M1) (Microsporidian parasite), this protein is Probable ethanolamine-phosphate cytidylyltransferase (MUQ1).